Here is a 909-residue protein sequence, read N- to C-terminus: Zinc finger and BTB domain-containing protein 41 (909 aa).

The 65-residue stretch at 88–152 folds into the BTB domain; that stretch reads CDLLIIVEGK…LYTSEFFVYK (65 aa). The segment at 207 to 230 adopts a C2H2-type 1 zinc-finger fold; sequence HQCKFCSRHFCYKKSLENHLAKTH. The disordered stretch occupies residues 252–344; that stretch reads RSKRNRKCPV…PEAGDSVGNV (93 aa). Residues 266-275 are compositionally biased toward acidic residues; the sequence is TSDDEQESGD. A compositionally biased stretch (basic and acidic residues) spans 284-295; the sequence is NFDKEKSDRNDS. Over residues 296-322 the composition is skewed to acidic residues; the sequence is EDPGSEYNAEEDELEEEMSDEYSDIEE. C2H2-type zinc fingers lie at residues 361–383, 389–411, 422–445, 463–485, 491–514, 518–541, 547–569, 575–597, 603–625, 631–654, 668–690, 696–718, and 724–747; these read LQCP…TRVH, FECD…RKKH, HKCP…KRFH, WKCD…MILH, FKCT…EKFH, FPCD…ECTH, WTCF…LRIH, HLCS…LRVH, YECD…KKIH, HQCE…KSVH, HQCD…FRTH, YKCQ…LVIH, and FNCQ…DHVH.

It is found in the nucleus. In terms of biological role, may be involved in transcriptional regulation. This is Zinc finger and BTB domain-containing protein 41 (ZBTB41) from Homo sapiens (Human).